The primary structure comprises 316 residues: Ribosomal RNA small subunit methyltransferase H (316 aa).

Residues 35–37, aspartate 55, phenylalanine 79, aspartate 101, and glutamine 108 contribute to the S-adenosyl-L-methionine site; that span reads GGH.

This sequence belongs to the methyltransferase superfamily. RsmH family.

It is found in the cytoplasm. It carries out the reaction cytidine(1402) in 16S rRNA + S-adenosyl-L-methionine = N(4)-methylcytidine(1402) in 16S rRNA + S-adenosyl-L-homocysteine + H(+). In terms of biological role, specifically methylates the N4 position of cytidine in position 1402 (C1402) of 16S rRNA. In Aliivibrio fischeri (strain MJ11) (Vibrio fischeri), this protein is Ribosomal RNA small subunit methyltransferase H.